The chain runs to 586 residues: Pyruvate kinase (586 aa).

Residue arginine 32 coordinates substrate. K(+)-binding residues include asparagine 34, serine 36, aspartate 66, and threonine 67. An ATP-binding site is contributed by 34–37 (NFSH). ATP is bound by residues arginine 73 and lysine 156. Position 222 (glutamate 222) interacts with Mg(2+). Positions 245, 246, and 278 each coordinate substrate. Aspartate 246 provides a ligand contact to Mg(2+).

The protein belongs to the pyruvate kinase family. It in the C-terminal section; belongs to the PEP-utilizing enzyme family. It depends on Mg(2+) as a cofactor. K(+) is required as a cofactor.

The catalysed reaction is pyruvate + ATP = phosphoenolpyruvate + ADP + H(+). It participates in carbohydrate degradation; glycolysis; pyruvate from D-glyceraldehyde 3-phosphate: step 5/5. The chain is Pyruvate kinase (pyk) from Staphylococcus haemolyticus (strain JCSC1435).